The primary structure comprises 117 residues: Alpha-endosulfine (117 aa).

The segment at 1 to 53 is disordered; the sequence is MAAPLGTGARAEDSGQEKQDSQEKETVIPERAEEAKLKAKYPNLGQKPGGSDF. The span at 10-37 shows a compositional bias: basic and acidic residues; the sequence is RAEDSGQEKQDSQEKETVIPERAEEAKL. Serine 67 is modified (phosphoserine; by GWL). The interval 76–117 is disordered; that stretch reads KMKNKQLPTAGPDKNLVTGDHIPKPQDLPQRKSSLVASKLAG.

Belongs to the endosulfine family. Phosphorylation at Ser-67 by GWL during mitosis is essential for interaction with PPP2R2D (PR55-delta) and subsequent inactivation of PP2A.

Its subcellular location is the cytoplasm. Functionally, protein phosphatase inhibitor that specifically inhibits protein phosphatase 2A (PP2A) during mitosis. When phosphorylated at Ser-67 during mitosis, specifically interacts with PPP2R2D (PR55-delta) and inhibits its activity, leading to inactivation of PP2A, an essential condition to keep cyclin-B1-CDK1 activity high during M phase. The sequence is that of Alpha-endosulfine (ENSA) from Gallus gallus (Chicken).